Reading from the N-terminus, the 140-residue chain is RxLR effector protein Avh23 (140 aa).

The N-terminal stretch at Met-1–Ala-21 is a signal peptide. The short motif at Arg-54 to Arg-72 is the RxLR-dEER element. One copy of the ADA2-binding IR1 repeat lies at Gln-100 to Asp-113. Residues Gln-114–Ala-127 form an ADA2-binding IR2 repeat.

It belongs to the RxLR effector family. As to quaternary structure, interacts with host histone acetyl transferase SAGA complex subunit ADA2.

Its subcellular location is the secreted. It is found in the host nucleus. The protein localises to the host cytoplasm. Functionally, effector that suppresses plant defense responses during the early stages of pathogen infection. Suppresses cell death induced by effectors and PAMPs in plant hosts. Acts as a modulator of histone acetyltransferase (HAT) in plants. Avh23 binds to the ADA2 subunit of the HAT complex SAGA and disrupts its assembly by interfering with the association of ADA2 with the catalytic subunit GCN5. As such, Avh23 suppresses H3K9 acetylation mediated by the ADA2/GCN5 module and increases plant susceptibility. The polypeptide is RxLR effector protein Avh23 (Phytophthora sojae (Soybean stem and root rot agent)).